A 156-amino-acid polypeptide reads, in one-letter code: ATP synthase subunit b (156 aa).

The chain crosses the membrane as a helical span at residues 5-25 (LTLIGQAIAFAIFVAFCMKFV).

The protein belongs to the ATPase B chain family. As to quaternary structure, F-type ATPases have 2 components, F(1) - the catalytic core - and F(0) - the membrane proton channel. F(1) has five subunits: alpha(3), beta(3), gamma(1), delta(1), epsilon(1). F(0) has three main subunits: a(1), b(2) and c(10-14). The alpha and beta chains form an alternating ring which encloses part of the gamma chain. F(1) is attached to F(0) by a central stalk formed by the gamma and epsilon chains, while a peripheral stalk is formed by the delta and b chains.

The protein resides in the cell inner membrane. Functionally, f(1)F(0) ATP synthase produces ATP from ADP in the presence of a proton or sodium gradient. F-type ATPases consist of two structural domains, F(1) containing the extramembraneous catalytic core and F(0) containing the membrane proton channel, linked together by a central stalk and a peripheral stalk. During catalysis, ATP synthesis in the catalytic domain of F(1) is coupled via a rotary mechanism of the central stalk subunits to proton translocation. Component of the F(0) channel, it forms part of the peripheral stalk, linking F(1) to F(0). This chain is ATP synthase subunit b, found in Acinetobacter baylyi (strain ATCC 33305 / BD413 / ADP1).